A 553-amino-acid chain; its full sequence is ATP synthase subunit alpha (553 aa).

Residue 173–180 (GDRQTGKT) coordinates ATP. A disordered region spans residues 527–553 (EALDPSAVEREEIAVHHRKPSDETAGH). Residues 533-553 (AVEREEIAVHHRKPSDETAGH) show a composition bias toward basic and acidic residues.

This sequence belongs to the ATPase alpha/beta chains family. As to quaternary structure, F-type ATPases have 2 components, CF(1) - the catalytic core - and CF(0) - the membrane proton channel. CF(1) has five subunits: alpha(3), beta(3), gamma(1), delta(1), epsilon(1). CF(0) has three main subunits: a(1), b(2) and c(9-12). The alpha and beta chains form an alternating ring which encloses part of the gamma chain. CF(1) is attached to CF(0) by a central stalk formed by the gamma and epsilon chains, while a peripheral stalk is formed by the delta and b chains.

The protein resides in the cell membrane. It carries out the reaction ATP + H2O + 4 H(+)(in) = ADP + phosphate + 5 H(+)(out). Functionally, produces ATP from ADP in the presence of a proton gradient across the membrane. The alpha chain is a regulatory subunit. In Parafrankia sp. (strain EAN1pec), this protein is ATP synthase subunit alpha.